The following is a 1356-amino-acid chain: DNA-directed RNA polymerase subunit beta (1356 aa).

It belongs to the RNA polymerase beta chain family. In terms of assembly, the RNAP catalytic core consists of 2 alpha, 1 beta, 1 beta' and 1 omega subunit. When a sigma factor is associated with the core the holoenzyme is formed, which can initiate transcription.

The catalysed reaction is RNA(n) + a ribonucleoside 5'-triphosphate = RNA(n+1) + diphosphate. Its function is as follows. DNA-dependent RNA polymerase catalyzes the transcription of DNA into RNA using the four ribonucleoside triphosphates as substrates. This chain is DNA-directed RNA polymerase subunit beta, found in Phenylobacterium zucineum (strain HLK1).